Consider the following 325-residue polypeptide: ATP phosphoribosyltransferase (325 aa).

This sequence belongs to the ATP phosphoribosyltransferase family. Long subfamily. It depends on Mg(2+) as a cofactor.

It is found in the cytoplasm. It catalyses the reaction 1-(5-phospho-beta-D-ribosyl)-ATP + diphosphate = 5-phospho-alpha-D-ribose 1-diphosphate + ATP. It functions in the pathway amino-acid biosynthesis; L-histidine biosynthesis; L-histidine from 5-phospho-alpha-D-ribose 1-diphosphate: step 1/9. Feedback inhibited by histidine. Its function is as follows. Catalyzes the condensation of ATP and 5-phosphoribose 1-diphosphate to form N'-(5'-phosphoribosyl)-ATP (PR-ATP). Has a crucial role in the pathway because the rate of histidine biosynthesis seems to be controlled primarily by regulation of HisG enzymatic activity. This is ATP phosphoribosyltransferase from Nitrobacter winogradskyi (strain ATCC 25391 / DSM 10237 / CIP 104748 / NCIMB 11846 / Nb-255).